We begin with the raw amino-acid sequence, 350 residues long: Ribosomal RNA large subunit methyltransferase M (350 aa).

S-adenosyl-L-methionine is bound by residues 217-220 (APGG), Asp-236, Asp-256, and Asp-272. The active-site Proton acceptor is Lys-301.

It belongs to the class I-like SAM-binding methyltransferase superfamily. RNA methyltransferase RlmE family. RlmM subfamily. In terms of assembly, monomer.

The protein resides in the cytoplasm. It catalyses the reaction cytidine(2498) in 23S rRNA + S-adenosyl-L-methionine = 2'-O-methylcytidine(2498) in 23S rRNA + S-adenosyl-L-homocysteine + H(+). Its function is as follows. Catalyzes the 2'-O-methylation at nucleotide C2498 in 23S rRNA. The protein is Ribosomal RNA large subunit methyltransferase M of Teredinibacter turnerae (strain ATCC 39867 / T7901).